The sequence spans 467 residues: Fumarate hydratase class II (467 aa).

Substrate-binding positions include 98 to 100 (SGT), arginine 126, 129 to 132 (HPND), 139 to 141 (SSN), and threonine 187. The Proton donor/acceptor role is filled by histidine 188. Serine 318 is an active-site residue. Substrate contacts are provided by residues serine 319 and 324 to 326 (KVN).

This sequence belongs to the class-II fumarase/aspartase family. Fumarase subfamily. In terms of assembly, homotetramer.

It is found in the cytoplasm. It carries out the reaction (S)-malate = fumarate + H2O. It participates in carbohydrate metabolism; tricarboxylic acid cycle; (S)-malate from fumarate: step 1/1. Functionally, involved in the TCA cycle. Catalyzes the stereospecific interconversion of fumarate to L-malate. This chain is Fumarate hydratase class II, found in Salmonella typhi.